The following is a 1748-amino-acid chain: Tight junction protein 1 (1748 aa).

One can recognise a PDZ 1 domain in the interval 23-110 (TVTLHRAPGF…NAKITIRRKK (88 aa)). Basic residues predominate over residues 102-112 (AKITIRRKKKV). The segment at 102 to 189 (AKITIRRKKK…QPAKPTKVTL (88 aa)) is disordered. A compositionally biased stretch (acidic residues) spans 123 to 136 (PVSDNEEDSYDEEI). Position 125 is a phosphoserine (S125). A Phosphotyrosine modification is found at Y132. Over residues 149-175 (RRSEKIWPRDRSASRERSLSPRSDRRS) the composition is skewed to basic and acidic residues. Residues S175, S178, and S179 each carry the phosphoserine modification. Position 185 is a phosphothreonine (T185). Residues 186 to 264 (KVTLVKSRKN…KLKMVVQRDE (79 aa)) enclose the PDZ 2 domain. Phosphoserine is present on residues S212 and S241. Position 267 is a phosphothreonine (T267). Residues S275, S277, S280, S284, S290, S294, S297, S300, S323, S329, S334, S337, and S353 each carry the phosphoserine modification. A disordered region spans residues 295–396 (LASDHSGRSH…PVYAQVGQPD (102 aa)). The segment covering 299-327 (HSGRSHDRPPRRSRSRSPDQRSEPSDHSR) has biased composition (basic and acidic residues). Residues 329 to 338 (SPQQPSNGSL) show a composition bias toward polar residues. The residue at position 354 (T354) is a Phosphothreonine. Positions 357–377 (KHADDHTPKTVEEVTVERNEK) are enriched in basic and acidic residues. A PDZ 3 domain is found at 421–502 (SMKLVKFRKG…GEEVTILAQK (82 aa)). The SH3 domain occupies 516-584 (GDSFYIRTHF…PNKNRAEQLA (69 aa)). A Guanylate kinase-like domain is found at 598 to 779 (RADFWRFRGL…TTTINLNSMN (182 aa)). Phosphoserine occurs at positions 617 and 622. The tract at residues 633–876 (YERVVLREAG…GTPPESAITR (244 aa)) is occludin (OCLN)-binding region. T809 carries the post-translational modification Phosphothreonine. Phosphoserine is present on residues S810 and S821. Position 822 is a phosphotyrosine (Y822). S824, S828, and S837 each carry phosphoserine. 2 disordered regions span residues 825 to 1081 (APGS…LRYE) and 1095 to 1587 (DDKQ…PEFD). Residues T846, T848, T854, T861, and T868 each carry the phosphothreonine modification. The span at 879–892 (EPVREDSSGMHHEN) shows a compositional bias: basic and acidic residues. The span at 893–906 (QTYPPYSPQAQPQP) shows a compositional bias: low complexity. S912 carries the post-translational modification Phosphoserine. Composition is skewed to polar residues over residues 934–953 (PETNPASSTSAVNHNVNLTN) and 963–979 (PSTSYSPQADSLRTPST). At S968 the chain carries Phosphoserine. The span at 998 to 1014 (DPTKVYRKDPYPEEMMR) shows a compositional bias: basic and acidic residues. Residues 1061 to 1072 (YESSSYTDQFSR) are compositionally biased toward polar residues. A phosphoserine mark is found at S1071, S1111, and S1139. The span at 1110–1125 (HSQDLDSRQHPEESSE) shows a compositional bias: basic and acidic residues. Y1140 and Y1165 each carry phosphotyrosine. An actin-binding region (ABR) region spans residues 1151–1371 (RASALRHEEQ…FDRRSFENKP (221 aa)). Composition is skewed to basic and acidic residues over residues 1269-1286 (KMFENKRSASLETKKDVN) and 1336-1347 (PPEDIVRSNHYD). Phosphotyrosine is present on Y1354. Phosphoserine is present on S1366. The segment covering 1389–1400 (SQNQSNFSSYSS) has biased composition (low complexity). Over residues 1403 to 1420 (KPPEADGVDRSFGEKRYE) the composition is skewed to basic and acidic residues. A Phosphoserine modification is found at S1413. Composition is skewed to polar residues over residues 1459–1470 (NSVSLDFQNSLV) and 1512–1522 (GTEQTQKTVTP). Over residues 1538 to 1547 (PFERKFESPK) the composition is skewed to basic and acidic residues. S1545 and S1617 each carry phosphoserine. One can recognise a ZU5 domain in the interval 1634 to 1748 (ATARGIFNSN…NCVSVLIDHF (115 aa)).

This sequence belongs to the MAGUK family. In terms of assembly, homodimer. Forms heterodimers TJP3. Forms a heterodimer (via PDZ2 domain) with TJP2/ZO2 (via PDZ2 domain). Interacts with OCLN, CALM, claudins, CGN/cingulin, CXADR, GJA12, GJD3 and UBN1. Interacts (via ZU5 domain) with CDC42BPB and MYZAP. Interacts (via PDZ domain) with GJA1. Interacts (via PDZ domains) with ANKRD2. Interacts with POPDC1 (via the C-terminus cytoplasmic tail). Interacts with HSPA4 and KIRREL1. Interacts with DLL1. Interacts with USP53 (via the C-terminal region). Interacts (via ABR region) with F-actin. Interacts with DNMBP (via C-terminal domain); required for the apical cell-cell junction localization of DNMBP. Interacts with SPEF1. Interacts (via N-terminus) with CTNNA1. Interacts with CLDN18. Interacts with CLDN16 (via TRV motif); this is a prerequisite for anchoring of CLDN16 at the tight junction. Interacts with PKP1; the interaction facilitates TJP1/ZO-1 localization to the plasma membrane. Interacts with PATJ (via PDZ1-6 domains); the interaction is required for attachment and extension of TJP1/ZO1 condensates along the apical cell interface. Post-translationally, phosphorylated at tyrosine redidues in response to epidermal growth factor (EGF). This response is dependent on an intact actin microfilament system. Dephosphorylated by PTPRJ. The alpha-containing isoform is found in most epithelial cell junctions. The short isoform is found both in endothelial cells and the highly specialized epithelial junctions of renal glomeruli and Sertoli cells of the seminiferous tubules.

It is found in the cell membrane. Its subcellular location is the cell junction. The protein localises to the tight junction. It localises to the gap junction. The protein resides in the cell projection. It is found in the podosome. Its function is as follows. TJP1, TJP2, and TJP3 are closely related scaffolding proteins that link tight junction (TJ) transmembrane proteins such as claudins, junctional adhesion molecules, and occludin to the actin cytoskeleton. Forms a multistranded TJP1/ZO1 condensate which elongates to form a tight junction belt, the belt is anchored at the apical cell membrane via interaction with PATJ. The tight junction acts to limit movement of substances through the paracellular space and as a boundary between the compositionally distinct apical and basolateral plasma membrane domains of epithelial and endothelial cells. Necessary for lumenogenesis, and particularly efficient epithelial polarization and barrier formation. Plays a role in the regulation of cell migration by targeting CDC42BPB to the leading edge of migrating cells. Plays an important role in podosome formation and associated function, thus regulating cell adhesion and matrix remodeling. With TJP2 and TJP3, participates in the junctional retention and stability of the transcription factor DBPA, but is not involved in its shuttling to the nucleus. May play a role in mediating cell morphology changes during ameloblast differentiation via its role in tight junctions. The protein is Tight junction protein 1 of Homo sapiens (Human).